A 776-amino-acid chain; its full sequence is Endonuclease MutS2 (776 aa).

330–337 (GPNTGGKT) serves as a coordination point for ATP. The region spanning 701 to 776 (LDLRGMRYEE…GSGATIAILK (76 aa)) is the Smr domain.

This sequence belongs to the DNA mismatch repair MutS family. MutS2 subfamily. In terms of assembly, homodimer. Binds to stalled ribosomes, contacting rRNA.

Functionally, endonuclease that is involved in the suppression of homologous recombination and thus may have a key role in the control of bacterial genetic diversity. Acts as a ribosome collision sensor, splitting the ribosome into its 2 subunits. Detects stalled/collided 70S ribosomes which it binds and splits by an ATP-hydrolysis driven conformational change. Acts upstream of the ribosome quality control system (RQC), a ribosome-associated complex that mediates the extraction of incompletely synthesized nascent chains from stalled ribosomes and their subsequent degradation. Probably generates substrates for RQC. The sequence is that of Endonuclease MutS2 from Lactococcus lactis subsp. cremoris (strain SK11).